We begin with the raw amino-acid sequence, 862 residues long: MTSIDSSELEKHTPMMRQYLTMKAAHPEMLLFYRMGDFYELFYEDAKLASELLGISLTARGKSGGDPIPMAGLPYHAVEGYLAKLVQIGQSVAICEQVGDPATSKGPVERKVVRIVTPGTLTDEALLQEHQDNLLAAIYQGKVGFGYATLDISSGRFVIAELDTQEALEAELQRTRPVELLYSEDFSNLSLINHLKGIRRRPEWEFDFDTSVNLLLQQFGTKDLHGFGISDARLSLQAAGCLMQYVKDTQKTALPHINAIVRFNQADSIILDAATRRNLELTQNLSGGREHTLAWVLDNTATPMGSRMLQRWLHQPLRDNNIIASRHNAVAELIEANLFDELHQQLKSLGDIERIMARLALRSARPRDFARLRQALSLLPELQHTLGQCKTPLLTKLAQLIGEFPAEHELLENAIVDSPPMLIRDGGVIRSGYHSELDEWRALSEGASDYLTELEAREKQATGISTLKVGYNRVHGYYIEVSRLQADKVPLSYQRRQTLKGTERYITPELKVYEEKVLSSQGKALALEKQLWDQLFDLILPKLNELRDFANAAAELDVICCFAERAESLHYTQPQMVSKTGIQINAGRHPVVERVSSTAFIANPVNLDAKRHMLIVTGPNMGGKSTYMRQVALISLMAHIGCFVPADSAVIGPIDRIFTRIGASDDLASGRSTFMVEMTETANILHNATSQSLVLMDEIGRGTSTYDGLSLAWSAAEYLALQIKAMTLFATHYFELTQLPDLIPGANNVHLDAIEHDDTIAFMHAVQEGAASKSYGLQVAALAGVPSHVIQAAKHKLHQLESRDNQASPAVASAPQQQSLSLSPAPMMGEKALNKLTTINPDELSPKQALDLLYELKKLAKS.

618 to 625 contacts ATP; the sequence is GPNMGGKS. The disordered stretch occupies residues 799–824; it reads QLESRDNQASPAVASAPQQQSLSLSP. Residues 806–824 are compositionally biased toward low complexity; sequence QASPAVASAPQQQSLSLSP.

Belongs to the DNA mismatch repair MutS family.

Its function is as follows. This protein is involved in the repair of mismatches in DNA. It is possible that it carries out the mismatch recognition step. This protein has a weak ATPase activity. The chain is DNA mismatch repair protein MutS from Shewanella denitrificans (strain OS217 / ATCC BAA-1090 / DSM 15013).